A 493-amino-acid polypeptide reads, in one-letter code: GTPase Der (493 aa).

In terms of domain architecture, EngA-type G 1 spans 3–166 (PVIALVGRPN…EALGIFPKDN (164 aa)). Residues 9–16 (GRPNVGKS), 56–60 (DTGGI), and 118–121 (NKVD) each bind GTP. The segment covering 167–184 (VEEEGEGEPASEEVAEGE) has biased composition (acidic residues). The disordered stretch occupies residues 167–195 (VEEEGEGEPASEEVAEGEEPTRIPGPSEK). An EngA-type G 2 domain is found at 198–371 (IKIAIIGRPN…SVQESFRSAV (174 aa)). GTP contacts are provided by residues 204 to 211 (GRPNVGKS), 251 to 255 (DTAGV), and 316 to 319 (NKWD). One can recognise a KH-like domain in the interval 372 to 456 (TRWPTSRLTS…PIRIEYKGGE (85 aa)). Residues 454-463 (GGENPYEGKK) are compositionally biased toward basic and acidic residues. The tract at residues 454 to 493 (GGENPYEGKKNSLTARQVNKKRRLMSHHKKAEKKKKDKRR) is disordered. Residues 471-493 (VNKKRRLMSHHKKAEKKKKDKRR) show a composition bias toward basic residues.

It belongs to the TRAFAC class TrmE-Era-EngA-EngB-Septin-like GTPase superfamily. EngA (Der) GTPase family. Associates with the 50S ribosomal subunit.

Functionally, GTPase that plays an essential role in the late steps of ribosome biogenesis. The sequence is that of GTPase Der from Pseudomonas aeruginosa (strain LESB58).